We begin with the raw amino-acid sequence, 478 residues long: Lysosome membrane protein 2 (478 aa).

Residues 1–4 lie on the Cytoplasmic side of the membrane; sequence MGRC. Residues 5 to 27 traverse the membrane as a helical segment; it reads CFYTAGTLSLLLLVTSVTLLVAR. Residues 28-433 are Lumenal-facing; it reads VFQKAVDQSI…RLKSMINTTL (406 aa). N-linked (GlcNAc...) asparagine glycans are attached at residues Asn45, Asn68, and Asn105. Positions 155–191 are important for interaction with GBA1; it reads IIEAMLKAYQQKLFVTHTVDELLWGYKDEILSLIHVF. N-linked (GlcNAc...) asparagine glycans are attached at residues Asn206, Asn224, Asn249, and Asn304. Intrachain disulfides connect Cys274-Cys329 and Cys312-Cys318. N-linked (GlcNAc...) asparagine glycans are attached at residues Asn325, Asn412, and Asn430. Residues 434–459 form a helical membrane-spanning segment; that stretch reads IITNIPYIIMALGVFFGLVFTWLACK. Over 460 to 478 the chain is Cytoplasmic; sequence GQGSMDEGTADERAPLIRT.

This sequence belongs to the CD36 family. As to quaternary structure, interacts with GBA1. In terms of assembly, (Microbial infection) Interacts with enterovirus 71 capsid proteins VP1 and VP2.

Its subcellular location is the lysosome membrane. Functionally, acts as a lysosomal receptor for glucosylceramidase (GBA1) targeting. Its function is as follows. (Microbial infection) Acts as a receptor for enterovirus 71. The protein is Lysosome membrane protein 2 (SCARB2) of Homo sapiens (Human).